Here is an 878-residue protein sequence, read N- to C-terminus: MDQQMALTWGLCYMALVALCWGHEVTEEEETVPLKTLECYNDYTNRIICSWADTEDAQGLINMTLLYHQLDKIQSVSCELSEKLMWSECPSSHRCVPRRCVIPYTRFSNGDNDYYSFQPDRDLGIQLMVPLAQHVQPPPPKDIHISPSGDHFLLEWSVSLGDSQVSWLSSKDIEFEVAYKRLQDSWEDASSLHTSNFQVNLEPKLFLPNSIYAARVRTRLSAGSSLSGRPSRWSPEVHWDSQPGDKAQPQNLQCFFDGIQSLHCSWEVWTQTTGSVSFGLFYRPSPAAPEEKCSPVVKEPQASVYTRYRCSLPVPEPSAHSQYTVSVKHLEQGKFIMSYYHIQMEPPILNQTKNRDSYSLHWETQKIPKYIDHTFQVQYKKKSESWKDSKTENLGRVNSMDLPQLEPDTSYCARVRVKPISDYDGIWSEWSNEYTWTTDWVMPTLWIVLILVFLIFTLLLALHFGRVYGYRTYRKWKEKIPNPSKSLLFQDGGKGLWPPGSMAAFATKNPALQGPQSRLLAEQQGVSYEHLEDNNVSPLTIEDPNIIRDPPSRPDTTPAASSESTEQLPNVQVEGPIPSSRPRKQLPSFDFNGPYLGPPQSHSLPDLPGQLGSPQVGGSLKPALPGSLEYMCLPPGGQVQLVPLSQVMGQGQAMDVQCGSSLETTGSPSVEPKENPPVELSVEKQEARDNPMTLPISSGGPEGSMMASDYVTPGDPVLTLPTGPLSTSLGPSLGLPSAQSPSLCLKLPRVPSGSPALGPPGFEDYVELPPSVSQAATSPPGHPAPPVASSPTVIPGEPREEVGPASPHPEGLLVLQQVGDYCFLPGLGPGSLSPHSKPPSPSLCSETEDLDQDLSVKKFPYQPLPQAPAIQFFKSLKY.

Positions 1 to 22 (MDQQMALTWGLCYMALVALCWG) are cleaved as a signal peptide. Residues 23–440 (HEVTEEEETV…SNEYTWTTDW (418 aa)) lie on the Extracellular side of the membrane. An intrachain disulfide couples cysteine 39 to cysteine 49. Asparagine 62 is a glycosylation site (N-linked (GlcNAc...) asparagine). A disulfide bridge links cysteine 78 with cysteine 95. Residues 139-244 (PPKDIHISPS…PEVHWDSQPG (106 aa)) form the Fibronectin type-III 1 domain. Residues 223–244 (GSSLSGRPSRWSPEVHWDSQPG) form a disordered region. 2 cysteine pairs are disulfide-bonded: cysteine 254-cysteine 264 and cysteine 293-cysteine 310. The Fibronectin type-III 2 domain maps to 343 to 438 (QMEPPILNQT…EWSNEYTWTT (96 aa)). Residue asparagine 350 is glycosylated (N-linked (GlcNAc...) asparagine). The short motif at 427 to 431 (WSEWS) is the WSXWS motif element. A helical transmembrane segment spans residues 441-462 (VMPTLWIVLILVFLIFTLLLAL). The Cytoplasmic portion of the chain corresponds to 463–878 (HFGRVYGYRT…AIQFFKSLKY (416 aa)). Residues 476–484 (WKEKIPNPS) carry the Box 1 motif motif. Disordered stretches follow at residues 539–620 (LTIE…GGSL) and 660–709 (SSLE…MASD). The span at 554–570 (PDTTPAASSESTEQLPN) shows a compositional bias: polar residues. Residues 671–689 (EPKENPPVELSVEKQEARD) show a composition bias toward basic and acidic residues. A phosphoserine mark is found at serine 752 and serine 754. A Phosphotyrosine modification is found at tyrosine 765. 2 disordered regions span residues 771–810 (SVSQAATSPPGHPAPPVASSPTVIPGEPREEVGPASPHPE) and 829–849 (PGSLSPHSKPPSPSLCSETED).

This sequence belongs to the type I cytokine receptor family. Type 4 subfamily. In terms of assembly, heterodimer of an alpha and a beta subunit.

It is found in the membrane. In terms of biological role, in mouse, there are two classes of high-affinity IL3 receptors. One contains this IL3-specific beta subunit and the other contains the beta subunit also shared by high-affinity IL5 and GM-CSF receptors. The protein is Interleukin-3 receptor class 2 subunit beta (Csf2rb2) of Mus musculus (Mouse).